Reading from the N-terminus, the 205-residue chain is Ras-related protein Rab-1A (205 aa).

Residues 18 to 26, 36 to 43, 66 to 70, 124 to 127, and 154 to 156 each bind GTP; these read GDSGVGKSC, YTESYIST, DTAGQ, NKSD, and SAK. The Effector region signature appears at 40–48; that stretch reads YISTIGVDF. Over residues 183 to 198 the composition is skewed to polar residues; it reads SDSKPSVKINSSTPVS. Residues 183 to 205 form a disordered region; the sequence is SDSKPSVKINSSTPVSANKGGCC. Residues C204 and C205 are each lipidated (S-geranylgeranyl cysteine).

It belongs to the small GTPase superfamily. Rab family.

It localises to the golgi apparatus. It is found in the endoplasmic reticulum. In terms of biological role, probably required for transit of protein from the ER through Golgi compartment. This chain is Ras-related protein Rab-1A (RAB1A), found in Lymnaea stagnalis (Great pond snail).